The sequence spans 640 residues: Threonine--tRNA ligase (640 aa).

In terms of domain architecture, TGS spans 1-61 (MLVVTLPDGS…DKDSQLAIIT (61 aa)). Positions 242–533 (DHRRLGKQLD…LIENHTGNMP (292 aa)) are catalytic. Zn(2+) contacts are provided by C333, H384, and H510.

It belongs to the class-II aminoacyl-tRNA synthetase family. As to quaternary structure, homodimer. Zn(2+) is required as a cofactor.

It is found in the cytoplasm. It carries out the reaction tRNA(Thr) + L-threonine + ATP = L-threonyl-tRNA(Thr) + AMP + diphosphate + H(+). Its function is as follows. Catalyzes the attachment of threonine to tRNA(Thr) in a two-step reaction: L-threonine is first activated by ATP to form Thr-AMP and then transferred to the acceptor end of tRNA(Thr). Also edits incorrectly charged L-seryl-tRNA(Thr). In Polynucleobacter necessarius subsp. necessarius (strain STIR1), this protein is Threonine--tRNA ligase.